Consider the following 111-residue polypeptide: Large ribosomal subunit protein uL24 (111 aa).

The protein belongs to the universal ribosomal protein uL24 family. Part of the 50S ribosomal subunit.

Functionally, one of two assembly initiator proteins, it binds directly to the 5'-end of the 23S rRNA, where it nucleates assembly of the 50S subunit. In terms of biological role, one of the proteins that surrounds the polypeptide exit tunnel on the outside of the subunit. The protein is Large ribosomal subunit protein uL24 of Heliobacterium modesticaldum (strain ATCC 51547 / Ice1).